Here is a 194-residue protein sequence, read N- to C-terminus: Fibroblast growth factor 7 (194 aa).

An N-terminal signal peptide occupies residues 1-31; that stretch reads MRKWILTWILPTLLYRSCFHIICLVGTISLA. N-linked (GlcNAc...) asparagine glycosylation is present at Asn45.

The protein belongs to the heparin-binding growth factors family. As to quaternary structure, interacts with FGFBP1. Interacts with FGFR2. Affinity between fibroblast growth factors (FGFs) and their receptors is increased by heparan sulfate glycosaminoglycans that function as coreceptors.

The protein localises to the secreted. Functionally, plays an important role in the regulation of embryonic development, cell proliferation and cell differentiation. Required for normal branching morphogenesis. Growth factor active on keratinocytes. Possible major paracrine effector of normal epithelial cell proliferation. The polypeptide is Fibroblast growth factor 7 (FGF7) (Canis lupus familiaris (Dog)).